The chain runs to 284 residues: Interferon antagonist OPG040 (284 aa).

6 ANK repeats span residues 29–58 (HGHS…LKNL), 60–89 (ENEF…DDSQ), 93–122 (KGNT…RLMF), 127–157 (GWKT…TFDL), 159–188 (ILLS…STNT), and 193–222 (LFIP…NIYS).

The protein belongs to the orthopoxvirus OPG039 family.

Its subcellular location is the host cytoplasm. The protein resides in the host nucleus. Inhibits antiviral activity induced by type I interferons. Does not block signal transduction of IFN, but is important to counter the host antiviral state induced by a pre-treatment with IFN. Plays a role in the inhibition of host NF-kappa-B activation by preventing the acetylation of the RELA/p65 subunit of NF-kappaB. This is Interferon antagonist OPG040 (OPG039) from Bos taurus (Bovine).